A 220-amino-acid chain; its full sequence is Adenylate kinase (220 aa).

ATP is bound at residue 13-18 (GAGKGT). Positions 33 to 62 (STGDILRAAVKEGTPLGLEAQSYMNRGALV) are NMP. Residues T34, R39, 60-62 (ALV), 88-91 (GFPR), and Q95 contribute to the AMP site. Positions 129 to 170 (GRRTCPLCKRIFHVRFNPPPAAPPFCTDHTDCPSELVQRPDD) are LID. R130 is an ATP binding site. The Zn(2+) site is built by C133 and C136. 139–140 (IF) provides a ligand contact to ATP. Zn(2+) is bound by residues D156 and C160. 2 residues coordinate AMP: R167 and R178. R206 serves as a coordination point for ATP.

It belongs to the adenylate kinase family. As to quaternary structure, monomer.

It localises to the cytoplasm. It catalyses the reaction AMP + ATP = 2 ADP. It functions in the pathway purine metabolism; AMP biosynthesis via salvage pathway; AMP from ADP: step 1/1. Its function is as follows. Catalyzes the reversible transfer of the terminal phosphate group between ATP and AMP. Plays an important role in cellular energy homeostasis and in adenine nucleotide metabolism. The protein is Adenylate kinase of Gloeobacter violaceus (strain ATCC 29082 / PCC 7421).